Reading from the N-terminus, the 835-residue chain is Cap-specific mRNA (nucleoside-2'-O-)-methyltransferase 1 (835 aa).

The Bipartite nuclear localization signal signature appears at 2–19; it reads RRRNDPECTAPIKKQKKR. The interval 24–68 is disordered; sequence ALNLSAASGDEPPSSVNHAAKASTTSLSGSDSETEGKQHGSDSFD. S28, S31, S53, S66, and S91 each carry phosphoserine. Over residues 37–54 the composition is skewed to polar residues; that stretch reads SSVNHAAKASTTSLSGSD. The segment covering 57-68 has biased composition (basic and acidic residues); that stretch reads TEGKQHGSDSFD. The 47-residue stretch at 87–133 folds into the G-patch domain; it reads YNSVSQKLMAKMGFREGEGLGKYSQGRKDIVEASNQKGRRGLGLTLQ. K108 is modified (N6-acetyllysine). Residues 203-207 and R218 contribute to the substrate site; that span reads KSVFD. The RrmJ-type SAM-dependent 2'-O-MTase domain occupies 231-450; sequence FFLNRAAMKM…ERYVVCKGLK (220 aa). N234 serves as a coordination point for S-adenosyl-L-methionine. K239 is an active-site residue. Residues 277-283 and 335-336 each bind S-adenosyl-L-methionine; these read CAGPGGF and DI. D364 is a catalytic residue. 374-376 provides a ligand contact to substrate; it reads NLQ. Residue K404 is the Proton acceptor of the active site. N439 is a substrate binding site. Residues 727-835 form an interaction with POLR2A region; the sequence is SSGTPKLSYT…VLSFIQTHSA (109 aa). In terms of domain architecture, WW spans 752–786; the sequence is RTVNEPWTMGFSKSFKRKFFYNKKTKISTFDLPAD.

In terms of assembly, interacts with POLR2A (via C-terminus).

The protein resides in the nucleus. The catalysed reaction is a 5'-end (N(7)-methyl 5'-triphosphoguanosine)-ribonucleoside in mRNA + S-adenosyl-L-methionine = a 5'-end (N(7)-methyl 5'-triphosphoguanosine)-(2'-O-methyl-ribonucleoside) in mRNA + S-adenosyl-L-homocysteine + H(+). In terms of biological role, S-adenosyl-L-methionine-dependent methyltransferase that mediates mRNA cap1 2'-O-ribose methylation to the 5'-cap structure of mRNAs. Methylates the ribose of the first nucleotide of a m(7)GpppG-capped mRNA and small nuclear RNA (snRNA) to produce m(7)GpppRm (cap1). Displays a preference for cap0 transcripts. Cap1 modification is linked to higher levels of translation. May be involved in the interferon response pathway. The chain is Cap-specific mRNA (nucleoside-2'-O-)-methyltransferase 1 (CMTR1) from Ailuropoda melanoleuca (Giant panda).